Here is a 555-residue protein sequence, read N- to C-terminus: Bicyclo-germacrene synthase (555 aa).

The Mg(2+) site is built by D311 and E315. The short motif at 311-315 (DDTYE) is the DDXXD motif element. Homodimerization stretches follow at residues 316-322 (YATLDEL) and 392-429 (EAKW…VGVG). Mg(2+) contacts are provided by D459 and E467.

The protein belongs to the terpene synthase family. Homodimer. The cofactor is Mn(2+). Mg(2+) serves as cofactor. Expressed in peltate glandular trichomes. Present at low levels in flowers, leaves and stems.

The catalysed reaction is (2E,6E)-farnesyl diphosphate = bicyclogermacrene + diphosphate. It carries out the reaction (2E)-geranyl diphosphate = terpinolene + diphosphate. The enzyme catalyses (2E)-geranyl diphosphate = (4R)-limonene + diphosphate. It catalyses the reaction (2E)-geranyl diphosphate + H2O = (2E)-geraniol + diphosphate. The catalysed reaction is (2E,6E)-farnesyl diphosphate = allo-aromadendrene + diphosphate. It functions in the pathway secondary metabolite biosynthesis; terpenoid biosynthesis. In terms of biological role, involved in the biosynthesis of phenolic sesquiterpenes natural products. Sesquiterpene synthase converting (2E,6E)-farnesyl diphosphate (FPP) to alloaromadendrene and bicyclo-germacrene. The product formation is dependent on the metal ions present and in presence of manganese, bicyclo-germacrene is greatly favored while both alloaromadendrene and bicyclo-germacrene are produced in equivalent amounts in the presence of magnesium. Can also convert geranyl diphosphate (GPP) to terpinolene, limonene and geraniol, and this conversion is not affected by the presence of magnesium or manganese. In Origanum vulgare (Wild marjoram), this protein is Bicyclo-germacrene synthase (TPS4).